An 89-amino-acid chain; its full sequence is Small ribosomal subunit protein uS15 (89 aa).

Belongs to the universal ribosomal protein uS15 family. Part of the 30S ribosomal subunit. Forms a bridge to the 50S subunit in the 70S ribosome, contacting the 23S rRNA.

Functionally, one of the primary rRNA binding proteins, it binds directly to 16S rRNA where it helps nucleate assembly of the platform of the 30S subunit by binding and bridging several RNA helices of the 16S rRNA. Forms an intersubunit bridge (bridge B4) with the 23S rRNA of the 50S subunit in the ribosome. In Vibrio parahaemolyticus serotype O3:K6 (strain RIMD 2210633), this protein is Small ribosomal subunit protein uS15.